The primary structure comprises 787 residues: Protein translocase subunit SecA (787 aa).

Residues Q85, 103 to 107, and D492 contribute to the ATP site; that span reads GEGKT.

It belongs to the SecA family. Monomer and homodimer. Part of the essential Sec protein translocation apparatus which comprises SecA, SecYEG and auxiliary proteins SecDF. Other proteins may also be involved.

Its subcellular location is the cell membrane. It localises to the cytoplasm. The catalysed reaction is ATP + H2O + cellular proteinSide 1 = ADP + phosphate + cellular proteinSide 2.. Part of the Sec protein translocase complex. Interacts with the SecYEG preprotein conducting channel. Has a central role in coupling the hydrolysis of ATP to the transfer of proteins into and across the cell membrane, serving as an ATP-driven molecular motor driving the stepwise translocation of polypeptide chains across the membrane. The sequence is that of Protein translocase subunit SecA from Lacticaseibacillus casei (strain BL23) (Lactobacillus casei).